The primary structure comprises 262 residues: Nodulation protein J (262 aa).

The 227-residue stretch at 33 to 259 (ASLLGNLADP…FVSIALLRRR (227 aa)) folds into the ABC transmembrane type-2 domain. The next 6 helical transmembrane spans lie at 43 to 63 (MIYIFGLGSGLGVMLGNVGGV), 67 to 87 (AFLAAGMVATSAMTASTFETI), 119 to 139 (AWAATKASLAGTAIGIVTATL), 148 to 168 (IYVFPVIALTGLAFASLSMVV), 177 to 197 (YLVFYQSLVITPMLVLSGSVF), and 236 to 256 (LHLGALCLYIVLPFFVSIALL).

This sequence belongs to the ABC-2 integral membrane protein family. Lipooligosaccharide exporter (TC 3.A.1.102) subfamily. As to quaternary structure, the complex is composed of two ATP-binding proteins (NodI) and two transmembrane proteins (NodJ).

Its subcellular location is the cell inner membrane. In terms of biological role, part of the ABC transporter complex NodIJ involved in the export of the nodulation factors (Nod factors), the bacterial signal molecules that induce symbiosis and subsequent nodulation induction. Nod factors are LCO (lipo-chitin oligosaccharide), a modified beta-1,4-linked N-acetylglucosamine oligosaccharide. This subunit encodes the transporter. The sequence is that of Nodulation protein J (nodJ) from Neorhizobium galegae (Rhizobium galegae).